The primary structure comprises 338 residues: RNA 3'-terminal phosphate cyclase (338 aa).

ATP contacts are provided by residues glutamine 103 and 283–287 (YLADQ). The active-site Tele-AMP-histidine intermediate is histidine 308.

It belongs to the RNA 3'-terminal cyclase family. Type 1 subfamily.

The protein resides in the cytoplasm. It carries out the reaction a 3'-end 3'-phospho-ribonucleotide-RNA + ATP = a 3'-end 2',3'-cyclophospho-ribonucleotide-RNA + AMP + diphosphate. In terms of biological role, catalyzes the conversion of 3'-phosphate to a 2',3'-cyclic phosphodiester at the end of RNA. The mechanism of action of the enzyme occurs in 3 steps: (A) adenylation of the enzyme by ATP; (B) transfer of adenylate to an RNA-N3'P to produce RNA-N3'PP5'A; (C) and attack of the adjacent 2'-hydroxyl on the 3'-phosphorus in the diester linkage to produce the cyclic end product. The biological role of this enzyme is unknown but it is likely to function in some aspects of cellular RNA processing. The polypeptide is RNA 3'-terminal phosphate cyclase (Shigella boydii serotype 4 (strain Sb227)).